The chain runs to 319 residues: Curved DNA-binding protein (319 aa).

Residues 5–69 (DYYKILGVEP…QKRAEFDEIR (65 aa)) enclose the J domain.

It is found in the cytoplasm. It localises to the nucleoid. In terms of biological role, DNA-binding protein that preferentially recognizes a curved DNA sequence. It is probably a functional analog of DnaJ; displays overlapping activities with DnaJ, but functions under different conditions, probably acting as a molecular chaperone in an adaptive response to environmental stresses other than heat shock. Lacks autonomous chaperone activity; binds native substrates and targets them for recognition by DnaK. Its activity is inhibited by the binding of CbpM. The chain is Curved DNA-binding protein from Pseudomonas putida (strain ATCC 47054 / DSM 6125 / CFBP 8728 / NCIMB 11950 / KT2440).